A 261-amino-acid chain; its full sequence is Bcl-2-binding component 3, isoforms 3/4 (261 aa).

Positions 27-261 (QICGPRERHG…ASAGDFLCTM (235 aa)) are disordered. Low complexity predominate over residues 40 to 50 (PGGQLPGARRG). Pro residues predominate over residues 53-63 (PRRPAPLPARP). Over residues 64 to 73 (PGALGSVLRP) the composition is skewed to low complexity. Composition is skewed to basic residues over residues 74–87 (LRARPGCRPRRPHP) and 95–106 (RPHRPTRRHRRP). Over residues 124–146 (PGRSSALALAGGAAPGVARAQRP) the composition is skewed to low complexity. A compositionally biased stretch (gly residues) spans 147–171 (GGSGGRSHPGGPGSPRGGGTVGPGD). Residues 172–197 (RGPAAADGGRPQRTVRAAETRGAAAA) show a composition bias toward low complexity.

Does not interact with BCL2.

In terms of biological role, does not affect cell growth. This is Bcl-2-binding component 3, isoforms 3/4 (BBC3) from Homo sapiens (Human).